Consider the following 335-residue polypeptide: Beta-ketoacyl-[acyl-carrier-protein] synthase III (335 aa).

Catalysis depends on residues Cys-119 and His-261. The segment at 262–266 (QANQR) is ACP-binding. Asn-291 is a catalytic residue.

Belongs to the thiolase-like superfamily. FabH family. In terms of assembly, homodimer.

Its subcellular location is the cytoplasm. The enzyme catalyses malonyl-[ACP] + acetyl-CoA + H(+) = 3-oxobutanoyl-[ACP] + CO2 + CoA. The protein operates within lipid metabolism; fatty acid biosynthesis. In terms of biological role, catalyzes the condensation reaction of fatty acid synthesis by the addition to an acyl acceptor of two carbons from malonyl-ACP. Catalyzes the first condensation reaction which initiates fatty acid synthesis and may therefore play a role in governing the total rate of fatty acid production. Possesses both acetoacetyl-ACP synthase and acetyl transacylase activities. Its substrate specificity determines the biosynthesis of branched-chain and/or straight-chain of fatty acids. This chain is Beta-ketoacyl-[acyl-carrier-protein] synthase III, found in Prochlorococcus marinus (strain MIT 9312).